A 312-amino-acid polypeptide reads, in one-letter code: 2,3-dihydroxyphenylpropionate/2,3-dihydroxicinnamic acid 1,2-dioxygenase (312 aa).

The Proton donor role is filled by histidine 115. Histidine 179 functions as the Proton acceptor in the catalytic mechanism.

Belongs to the LigB/MhpB extradiol dioxygenase family. Homotetramer. Fe(2+) is required as a cofactor.

The enzyme catalyses 3-(2,3-dihydroxyphenyl)propanoate + O2 = (2Z,4E)-2-hydroxy-6-oxonona-2,4-dienedioate + H(+). The catalysed reaction is (2E)-3-(2,3-dihydroxyphenyl)prop-2-enoate + O2 = (2Z,4E,7E)-2-hydroxy-6-oxonona-2,4,7-trienedioate + H(+). The protein operates within aromatic compound metabolism; 3-phenylpropanoate degradation. In terms of biological role, catalyzes the non-heme iron(II)-dependent oxidative cleavage of 2,3-dihydroxyphenylpropionic acid and 2,3-dihydroxicinnamic acid into 2-hydroxy-6-ketononadienedioate and 2-hydroxy-6-ketononatrienedioate, respectively. The polypeptide is 2,3-dihydroxyphenylpropionate/2,3-dihydroxicinnamic acid 1,2-dioxygenase (Mycolicibacterium paratuberculosis (strain ATCC BAA-968 / K-10) (Mycobacterium paratuberculosis)).